A 240-amino-acid chain; its full sequence is Mitochondrial inner membrane protease ATP23 (240 aa).

Histidine 140 is a binding site for a divalent metal cation. Glutamate 141 is an active-site residue. Histidine 144 lines the a divalent metal cation pocket.

The protein belongs to the peptidase M76 family.

The protein localises to the mitochondrion inner membrane. Functionally, has a dual role in the assembly of mitochondrial ATPase. Acts as a protease that removes N-terminal residues of mitochondrial ATPase CF(0) subunit 6 at the intermembrane space side. Also involved in the correct assembly of the membrane-embedded ATPase CF(0) particle, probably mediating association of subunit 6 with the subunit 9 ring. The protein is Mitochondrial inner membrane protease ATP23 (ATP23) of Scheffersomyces stipitis (strain ATCC 58785 / CBS 6054 / NBRC 10063 / NRRL Y-11545) (Yeast).